Reading from the N-terminus, the 298-residue chain is Nucleotide-binding protein Dred_3054 (298 aa).

20–27 lines the ATP pocket; the sequence is GMSGAGKT. 71–74 lines the GTP pocket; it reads DIRG.

This sequence belongs to the RapZ-like family.

Displays ATPase and GTPase activities. This Desulforamulus reducens (strain ATCC BAA-1160 / DSM 100696 / MI-1) (Desulfotomaculum reducens) protein is Nucleotide-binding protein Dred_3054.